We begin with the raw amino-acid sequence, 211 residues long: Thiamine-phosphate synthase (211 aa).

4-amino-2-methyl-5-(diphosphooxymethyl)pyrimidine is bound by residues 37-41 (QLRIK) and N69. Positions 70 and 89 each coordinate Mg(2+). S108 contributes to the 4-amino-2-methyl-5-(diphosphooxymethyl)pyrimidine binding site. Position 134 to 136 (134 to 136 (TQT)) interacts with 2-[(2R,5Z)-2-carboxy-4-methylthiazol-5(2H)-ylidene]ethyl phosphate. 4-amino-2-methyl-5-(diphosphooxymethyl)pyrimidine is bound at residue K137. Residues G166 and 186-187 (VS) each bind 2-[(2R,5Z)-2-carboxy-4-methylthiazol-5(2H)-ylidene]ethyl phosphate.

It belongs to the thiamine-phosphate synthase family. Mg(2+) serves as cofactor.

The catalysed reaction is 2-[(2R,5Z)-2-carboxy-4-methylthiazol-5(2H)-ylidene]ethyl phosphate + 4-amino-2-methyl-5-(diphosphooxymethyl)pyrimidine + 2 H(+) = thiamine phosphate + CO2 + diphosphate. It carries out the reaction 2-(2-carboxy-4-methylthiazol-5-yl)ethyl phosphate + 4-amino-2-methyl-5-(diphosphooxymethyl)pyrimidine + 2 H(+) = thiamine phosphate + CO2 + diphosphate. The enzyme catalyses 4-methyl-5-(2-phosphooxyethyl)-thiazole + 4-amino-2-methyl-5-(diphosphooxymethyl)pyrimidine + H(+) = thiamine phosphate + diphosphate. Its pathway is cofactor biosynthesis; thiamine diphosphate biosynthesis; thiamine phosphate from 4-amino-2-methyl-5-diphosphomethylpyrimidine and 4-methyl-5-(2-phosphoethyl)-thiazole: step 1/1. Its function is as follows. Condenses 4-methyl-5-(beta-hydroxyethyl)thiazole monophosphate (THZ-P) and 2-methyl-4-amino-5-hydroxymethyl pyrimidine pyrophosphate (HMP-PP) to form thiamine monophosphate (TMP). This is Thiamine-phosphate synthase from Salmonella typhimurium (strain LT2 / SGSC1412 / ATCC 700720).